We begin with the raw amino-acid sequence, 305 residues long: Putative monooxygenase p33MONOX (305 aa).

Disordered stretches follow at residues 1-20 (MASR…LGKM) and 37-56 (LEDP…VPWK). Thr44 carries the post-translational modification Phosphothreonine. Positions 67 to 77 (LAKVEEGEASL) match the Flavin-containing monooxygenase motif motif. Residues 159-305 (SGEITKEERQ…DLNVLTPTGF (147 aa)) form a disordered region. Residues 169 to 183 (PASAQSTPSTTPHSS) show a composition bias toward low complexity. Thr175 is modified (phosphothreonine). A phosphoserine mark is found at Ser182 and Ser183. 2 stretches are compositionally biased toward polar residues: residues 191-210 (WFTS…TMDS) and 233-243 (KYDSGSSTTQA).

The protein belongs to the P33MONOX family. As to quaternary structure, interacts with NELFB, NOL12 and PRNP.

It is found in the cytoplasm. Potential NADPH-dependent oxidoreductase. May be involved in the regulation of neuronal survival, differentiation and axonal outgrowth. The chain is Putative monooxygenase p33MONOX (P33MONOX) from Pongo abelii (Sumatran orangutan).